Here is a 514-residue protein sequence, read N- to C-terminus: Beta-glucosidase 16 (514 aa).

The signal sequence occupies residues 1-21 (MRGKFLSLLLLITLACIGVSA). Glutamine 49 is an a beta-D-glucoside binding site. N-linked (GlcNAc...) asparagine glycosylation occurs at asparagine 80. A beta-D-glucoside-binding positions include histidine 153 and 198-199 (NE). Residue glutamate 199 is the Proton donor of the active site. Cysteine 218 and cysteine 226 form a disulfide bridge. Tyrosine 343 serves as a coordination point for a beta-D-glucoside. N-linked (GlcNAc...) asparagine glycosylation is present at asparagine 357. A beta-D-glucoside contacts are provided by residues glutamate 413, tryptophan 458, 465–466 (EW), and phenylalanine 474. Glutamate 413 functions as the Nucleophile in the catalytic mechanism.

This sequence belongs to the glycosyl hydrolase 1 family. In terms of tissue distribution, expressed at low levels in cauline leaves and flowers.

It catalyses the reaction Hydrolysis of terminal, non-reducing beta-D-glucosyl residues with release of beta-D-glucose.. In Arabidopsis thaliana (Mouse-ear cress), this protein is Beta-glucosidase 16.